The sequence spans 210 residues: Endo-1,4-beta-xylanase A (210 aa).

The first 19 residues, 1–19 (MKLKKKMLTLLLTASMSFG), serve as a signal peptide directing secretion. One can recognise a GH11 domain in the interval 20-210 (LFGATSSAAT…SSGRSNVTVW (191 aa)). Catalysis depends on Glu104, which acts as the Nucleophile. Glu197 serves as the catalytic Proton donor.

It belongs to the glycosyl hydrolase 11 (cellulase G) family.

It catalyses the reaction Endohydrolysis of (1-&gt;4)-beta-D-xylosidic linkages in xylans.. It functions in the pathway glycan degradation; xylan degradation. The protein is Endo-1,4-beta-xylanase A (xynA) of Geobacillus stearothermophilus (Bacillus stearothermophilus).